Reading from the N-terminus, the 93-residue chain is Chaperone NapD (93 aa).

This sequence belongs to the NapD family. Interacts with the cytoplasmic NapA precursor.

Its subcellular location is the cytoplasm. Its function is as follows. Chaperone for NapA, the catalytic subunit of the periplasmic nitrate reductase. It binds directly and specifically to the twin-arginine signal peptide of NapA, preventing premature interaction with the Tat translocase and premature export. The sequence is that of Chaperone NapD from Haemophilus influenzae (strain ATCC 51907 / DSM 11121 / KW20 / Rd).